Consider the following 126-residue polypeptide: 13 kDa ribonucleoprotein-associated protein (126 aa).

It belongs to the eukaryotic ribosomal protein eL8 family. In terms of assembly, component of the U3 snoRNP particle. Binds to the C'/D and B/C motifs in U3 snoRNA. Component of the 25S U4/U6.U5 tri-snRNP particle, a subcomplex of the spliceosome. Binds to the 5' stem-loop of U4 snRNA.

The protein localises to the nucleus. Its subcellular location is the nucleolus. Common component of the spliceosome and rRNA processing machinery. In association with the spliceosomal U4/U6.U5 tri-snRNP particle, required for splicing of pre-mRNA. In association with box C/D snoRNPs, required for processing of pre-ribosomal RNA (rRNA) and site-specific 2'-O-methylation of substrate RNAs. Essential for the accumulation and stability of U4 snRNA, U6 snRNA, and box C/D snoRNAs. This is 13 kDa ribonucleoprotein-associated protein (SNU13) from Yarrowia lipolytica (strain CLIB 122 / E 150) (Yeast).